We begin with the raw amino-acid sequence, 220 residues long: Tumor protein p53-inducible nuclear protein 2 (220 aa).

Low complexity predominate over residues 1–12; sequence MFQRLSSLFFST. Disordered regions lie at residues 1 to 24, 41 to 69, and 119 to 220; these read MFQR…CPRA, PDSY…LMDE, and PGSP…QFNY. At S14 the chain carries Phosphoserine. The LIR motif lies at 26–41; sequence VSEEDEVDGWLIIDLP. Pro residues predominate over residues 47 to 64; the sequence is PPSPGAAPAPAGRPPPAP. Residue S136 is modified to Phosphoserine. Residues 152 to 170 show a composition bias toward low complexity; that stretch reads HAAPLPARAALLEKAGQVR. A compositionally biased stretch (polar residues) spans 205–220; that stretch reads NQSSFIYQPCQRQFNY.

As to quaternary structure, interacts with VMP1, GABARAP, GABARAPL1, GABARAPL2, MAP1LC3A, MAP1LC3B, MAP1LC3C and THRA.

The protein localises to the cytoplasm. It localises to the cytosol. The protein resides in the nucleus. It is found in the PML body. Its subcellular location is the cytoplasmic vesicle. The protein localises to the autophagosome. Dual regulator of transcription and autophagy. Positively regulates autophagy and is required for autophagosome formation and processing. May act as a scaffold protein that recruits MAP1LC3A, GABARAP and GABARAPL2 and brings them to the autophagosome membrane by interacting with VMP1 where, in cooperation with the BECN1-PI3-kinase class III complex, they trigger autophagosome development. Acts as a transcriptional activator of THRA. This Homo sapiens (Human) protein is Tumor protein p53-inducible nuclear protein 2 (TP53INP2).